A 469-amino-acid chain; its full sequence is MKLSRRQFLQRSTLAGVATVTPTSLWAKNRPSLTIPPMIEVGRGRPVRLDFRPAQTQFNKGKLVDVWGVNGRYLAPTVRVKSGDFVKLTYTNNLPQALSINIQGLQAPTEMIGSIHRAIDKNSSWSPILSVNQSACTAWYHADTMLNSAFQVYRGLAGLWIIEDSESRKASLPNKYGVNDIPLILQDQLINSDGIQVIDTQTNQFFGKRLFVNGQESPYFDVPRGWVRLRIANASLSRHYDLRLDNGKPLYLIATGIGFLADMVEMEHISLAPSERIEVLVDLNEGDKVSLITGKKRDFFDEIGKLFKDNNELNDNVVLEFRPEGLPSALNVTPKLPPFNVEEFNLKITQERKINLRPQDRLINHQRFDPKRIDFTVKKGTVERWYLTTTEEVGFTLQGAKFMVETRNRQAVPHKQLAWRDCVWLEPTQETTLLVKFEHTASEQQPFTFGVSDLMLRDRGCMGQFVVAE.

The tat-type signal signal peptide spans 1-27 (MKLSRRQFLQRSTLAGVATVTPTSLWA).

This sequence belongs to the FtsP family. In terms of processing, predicted to be exported by the Tat system. The position of the signal peptide cleavage has not been experimentally proven.

It is found in the periplasm. Its function is as follows. Cell division protein that is required for growth during stress conditions. May be involved in protecting or stabilizing the divisomal assembly under conditions of stress. The chain is Cell division protein FtsP from Glaesserella parasuis serovar 5 (strain SH0165) (Haemophilus parasuis).